The following is a 217-amino-acid chain: Probable transaldolase (217 aa).

Lys-85 serves as the catalytic Schiff-base intermediate with substrate.

It belongs to the transaldolase family. Type 3B subfamily.

The protein localises to the cytoplasm. It carries out the reaction D-sedoheptulose 7-phosphate + D-glyceraldehyde 3-phosphate = D-erythrose 4-phosphate + beta-D-fructose 6-phosphate. The protein operates within carbohydrate degradation; pentose phosphate pathway; D-glyceraldehyde 3-phosphate and beta-D-fructose 6-phosphate from D-ribose 5-phosphate and D-xylulose 5-phosphate (non-oxidative stage): step 2/3. Transaldolase is important for the balance of metabolites in the pentose-phosphate pathway. This Agathobacter rectalis (strain ATCC 33656 / DSM 3377 / JCM 17463 / KCTC 5835 / VPI 0990) (Eubacterium rectale) protein is Probable transaldolase.